A 719-amino-acid polypeptide reads, in one-letter code: Histone-lysine N-methyltransferase SETDB2 (719 aa).

Over residues 72-82 (SQKEVNAQSSD) the composition is skewed to polar residues. The interval 72 to 102 (SQKEVNAQSSDPMPVTQKEQENKSNAFPSTS) is disordered. In terms of domain architecture, MBD spans 157 to 229 (LNLKGENPLQ…DNFSFNTYVQ (73 aa)). Residues 291–364 (DSCDCSEGCI…LCQNRVVQHG (74 aa)) enclose the Pre-SET domain. 9 residues coordinate Zn(2+): Cys-293, Cys-295, Cys-299, Cys-305, Cys-307, Cys-345, Cys-349, Cys-351, and Cys-356. Residues 367–694 (VRLQVFKTEQ…ARTELTWDYG (328 aa)) enclose the SET domain. S-adenosyl-L-methionine-binding positions include 377 to 379 (KGW) and Asp-418. The tract at residues 508–547 (FVSSESVTPEDNDGFKPPREHLNSKTKGAQKDSSSNHVDE) is disordered. Over residues 520-530 (DGFKPPREHLN) the composition is skewed to basic and acidic residues. Polar residues predominate over residues 532–543 (KTKGAQKDSSSN). Residues Arg-648 and 651–652 (NH) contribute to the S-adenosyl-L-methionine site. Cys-654, Cys-707, Cys-709, and Cys-714 together coordinate Zn(2+).

It belongs to the class V-like SAM-binding methyltransferase superfamily. In terms of tissue distribution, ubiquitous. Highest expression in heart, testis and ovary.

It is found in the nucleus. The protein resides in the chromosome. The enzyme catalyses N(6),N(6)-dimethyl-L-lysyl(9)-[histone H3] + S-adenosyl-L-methionine = N(6),N(6),N(6)-trimethyl-L-lysyl(9)-[histone H3] + S-adenosyl-L-homocysteine + H(+). Histone methyltransferase involved in left-right axis specification in early development and mitosis. Specifically trimethylates 'Lys-9' of histone H3 (H3K9me3). H3K9me3 is a specific tag for epigenetic transcriptional repression that recruits HP1 (CBX1, CBX3 and/or CBX5) proteins to methylated histones. Contributes to H3K9me3 in both the interspersed repetitive elements and centromere-associated repeats. Plays a role in chromosome condensation and segregation during mitosis. This Homo sapiens (Human) protein is Histone-lysine N-methyltransferase SETDB2 (SETDB2).